Here is a 530-residue protein sequence, read N- to C-terminus: uncharacterized protein (530 aa).

The stretch at 485–529 forms a coiled coil; sequence SKEENREIKLSIRENKEKQRKKSVEKSVSKLQNQLNRLLNKNTIE.

This is an uncharacterized protein from Acanthamoeba polyphaga (Amoeba).